Here is an 872-residue protein sequence, read N- to C-terminus: Cilia- and flagella-associated protein 58 (872 aa).

Coiled-coil stretches lie at residues 106–595 and 642–839; these read VDSA…ADGE and ESQY…QKNK.

It belongs to the CFAP58 family. In terms of assembly, interacts with ODFP2.

The protein localises to the cell projection. The protein resides in the cilium. It is found in the flagellum. Its subcellular location is the cytoplasm. It localises to the cytoskeleton. The protein localises to the microtubule organizing center. The protein resides in the centrosome. Its function is as follows. Has an essential role in the assembly and organization of the sperm flagellar axoneme. Required for the elongation of the primary cilium and sperm flagellar midpiece via modulation of the Notch signaling pathway. The protein is Cilia- and flagella-associated protein 58 of Homo sapiens (Human).